The sequence spans 589 residues: Putative ABC transporter ATP-binding protein MG015 (589 aa).

The next 6 helical transmembrane spans lie at 9-29, 66-86, 161-181, 251-271, 280-300, and 303-323; these read LLYVFLCIVLGILYGIANPIL, LTIVSVTVFVAYALIFVFNVA, LIFLLSPVIALISLSILATLI, IFLFSWFGFISNITYLVSISI, IPSFGISVINYSFMLSYIASL, and ITLALDQIFTLWNLVQLGVVS. The ABC transmembrane type-1 domain maps to 9–319; that stretch reads LLYVFLCIVL…IFTLWNLVQL (311 aa). Residues 352–586 enclose the ABC transporter domain; the sequence is IRFENVAFGY…NGFYARLKQS (235 aa). 385-392 serves as a coordination point for ATP; it reads GPTGAGKS.

This sequence belongs to the ABC transporter superfamily.

Its subcellular location is the cell membrane. The sequence is that of Putative ABC transporter ATP-binding protein MG015 from Mycoplasma genitalium (strain ATCC 33530 / DSM 19775 / NCTC 10195 / G37) (Mycoplasmoides genitalium).